An 804-amino-acid chain; its full sequence is E3 ubiquitin-protein ligase RNF10 (804 aa).

Low complexity-rich tracts occupy residues 1–31 (MPQS…SGSS), 78–90 (SNQS…QKSK), and 104–113 (SKPFSSSSNG). The interval 1 to 134 (MPQSSPSAAA…AEFSPAQFSG (134 aa)) is disordered. Position 5 is a phosphoserine (Ser-5). Ser-110 carries the phosphoserine modification. Residues 114-124 (GRRDEVAEAQR) show a composition bias toward basic and acidic residues. A Phosphoserine modification is found at Ser-128. Residues 225 to 267 (CPICLYPPTAAKITRCGHIFCWACILHYLSLSEKTWSKCPICY) form an RING-type zinc finger. Disordered stretches follow at residues 589 to 611 (DIEK…ERRI), 646 to 665 (DSAL…LSPL), and 715 to 804 (KADG…VHTK). Over residues 601–611 (AREERRRERRI) the composition is skewed to basic and acidic residues. The span at 646–655 (DSALGPTSTE) shows a compositional bias: polar residues. A compositionally biased stretch (basic and acidic residues) spans 715 to 729 (KADGWPKTAPKKDDN). Residues 795 to 804 (LFSTSVVHTK) show a composition bias toward polar residues.

Belongs to the RNF10 family. In terms of assembly, interacts with MEOX2.

It is found in the cytoplasm. It localises to the nucleus. The catalysed reaction is S-ubiquitinyl-[E2 ubiquitin-conjugating enzyme]-L-cysteine + [acceptor protein]-L-lysine = [E2 ubiquitin-conjugating enzyme]-L-cysteine + N(6)-ubiquitinyl-[acceptor protein]-L-lysine.. It participates in protein modification; protein ubiquitination. Its function is as follows. E3 ubiquitin-protein ligase that catalyzes monoubiquitination of 40S ribosomal proteins RPS2/us5 and RPS3/us3 in response to ribosome stalling. Part of a ribosome quality control that takes place when ribosomes have stalled during translation initiation (iRQC): RNF10 acts by mediating monoubiquitination of RPS2/us5 and RPS3/us3, promoting their degradation by the proteasome. Also promotes ubiquitination of 40S ribosomal proteins in response to ribosome stalling during translation elongation. The action of RNF10 in iRQC is counteracted by USP10. May also act as a transcriptional factor involved in the regulation of MAG (Myelin-associated glycoprotein) expression. Acts as a regulator of Schwann cell differentiation and myelination. The polypeptide is E3 ubiquitin-protein ligase RNF10 (Mus musculus (Mouse)).